The primary structure comprises 94 residues: Large ribosomal subunit protein bL27 (94 aa).

Residues 1 to 9 (MLRLDLQFF) constitute a propeptide that is removed on maturation.

The protein belongs to the bacterial ribosomal protein bL27 family. Part of the 50S ribosomal subunit. In terms of processing, the N-terminus is cleaved by ribosomal processing cysteine protease Prp.

Functionally, plays a role in sporulation at high temperatures. The polypeptide is Large ribosomal subunit protein bL27 (rpmA) (Bacillus subtilis (strain 168)).